A 126-amino-acid chain; its full sequence is FCS-Like Zinc finger 7 (126 aa).

An FLZ-type zinc finger spans residues 72–116; the sequence is SFLVNCGFCKRGLAPGRDIYMYKGDAAFCSIECREQQMEHDEGKT.

The protein belongs to the FLZ family. In terms of assembly, interacts with KIN10 and KIN11 via its FLZ-type zinc finger domain. Interacts with KINB3 via its N-terminal part. Forms homodimer and heterodimer with FLZ1, FLZ2 and FLZ15 in vitro.

It localises to the cytoplasm. The protein resides in the nucleus. Functionally, may act as an adapter to facilitate the interaction of SnRK1 complex with effector proteins, conferring tissue- and stimulus-type specific differences in the SnRK1 regulation pathway. The polypeptide is FCS-Like Zinc finger 7 (Arabidopsis thaliana (Mouse-ear cress)).